A 122-amino-acid chain; its full sequence is Large ribosomal subunit protein uL18 (122 aa).

Belongs to the universal ribosomal protein uL18 family. In terms of assembly, part of the 50S ribosomal subunit; part of the 5S rRNA/L5/L18/L25 subcomplex. Contacts the 5S and 23S rRNAs.

This is one of the proteins that bind and probably mediate the attachment of the 5S RNA into the large ribosomal subunit, where it forms part of the central protuberance. In Mycobacterium tuberculosis (strain ATCC 25177 / H37Ra), this protein is Large ribosomal subunit protein uL18.